A 308-amino-acid polypeptide reads, in one-letter code: Snake venom metalloprotease inhibitor 02D01 (308 aa).

The N-terminal stretch at 1–23 (MFVSRLAASGLLLLSLLALSLDG) is a signal peptide. Positions 24 to 38 (KPLPQRQPHHIQPME) are excised as a propeptide. Pyrrolidone carboxylic acid is present on Gln-39. Positions 42–50 (LAPDAPPLE) are excised as a propeptide. Gln-51 is modified (pyrrolidone carboxylic acid). The propeptide occupies 54 to 62 (LAPDAPPLE). Pyrrolidone carboxylic acid is present on Gln-63. Positions 66–74 (LAPAAPPLE) are excised as a propeptide. A Pyrrolidone carboxylic acid modification is found at Gln-75. The propeptide occupies 78-86 (LAPDAPPME). At Gln-87 the chain carries Pyrrolidone carboxylic acid. The propeptide occupies 90 to 98 (LAPDAPPME). Residue Gln-99 is modified to Pyrrolidone carboxylic acid. Residues 102-110 (LAPDAPPME) constitute a propeptide that is removed on maturation. Pyrrolidone carboxylic acid is present on Gln-111. A propeptide spanning residues 114–122 (LAPDAPPME) is cleaved from the precursor. Gln-123 is subject to Pyrrolidone carboxylic acid. Positions 126–134 (LAPDAAPLE) are excised as a propeptide. Gln-135 bears the Pyrrolidone carboxylic acid mark. Residues 138 to 146 (LAPDAPPME) constitute a propeptide that is removed on maturation. Gln-147 carries the post-translational modification Pyrrolidone carboxylic acid. The propeptide occupies 150–158 (LAPDAPPME). Gln-159 carries the post-translational modification Pyrrolidone carboxylic acid. Positions 162 to 249 (QPQIPSLMEQ…KQASQKWGRL (88 aa)) are excised as a propeptide. The segment covering 172–182 (RQLSSGGTTAL) has biased composition (polar residues). Disordered regions lie at residues 172-228 (RQLS…AAAT) and 252-279 (HDHD…GARR). Gly residues predominate over residues 198–209 (VVGGGGGGGGGS). Low complexity predominate over residues 210 to 227 (KAALALPKPPKAKGAAAA). Residues 265–277 (SVGGGGGGGGGGA) are compositionally biased toward gly residues. Positions 278-286 (RRLKGLAKK) are excised as a propeptide. Residues Cys-292 and Cys-308 are joined by a disulfide bond.

This sequence in the C-terminal section; belongs to the natriuretic peptide family. In the central section; belongs to the pHpG family. Expressed by the venom gland.

The protein resides in the secreted. Its function is as follows. pEKW and poly-His-poly-Gly peptides may serve as metalloproteinase inhibitors during glandular storage. Their inhibition may be instantly disengaged, by dilution or physiochemical change, when venom is injected into tissue of the prey. Functionally, has a vasorelaxant activity in rat aortic strips and a diuretic potency in anesthetized rats. May act by activating natriuretic receptors (NPR1 and/or NPR2). The sequence is that of Snake venom metalloprotease inhibitor 02D01 from Echis ocellatus (Ocellated saw-scaled viper).